The primary structure comprises 640 residues: Threonine--tRNA ligase (640 aa).

Residues 1–59 enclose the TGS domain; it reads MKIKVKLPDGKEKEYDRGITPAEIAKELGVKKAIGAVVNGELWDLKRPIENDCELRLVT. The catalytic stretch occupies residues 240–531; sequence DHRKLGPHLE…LIEHFAGAFP (292 aa). The Zn(2+) site is built by Cys-332, His-383, and His-508.

The protein belongs to the class-II aminoacyl-tRNA synthetase family. Homodimer. Requires Zn(2+) as cofactor.

It localises to the cytoplasm. The enzyme catalyses tRNA(Thr) + L-threonine + ATP = L-threonyl-tRNA(Thr) + AMP + diphosphate + H(+). Its function is as follows. Catalyzes the attachment of threonine to tRNA(Thr) in a two-step reaction: L-threonine is first activated by ATP to form Thr-AMP and then transferred to the acceptor end of tRNA(Thr). Also edits incorrectly charged L-seryl-tRNA(Thr). The polypeptide is Threonine--tRNA ligase (Thermotoga petrophila (strain ATCC BAA-488 / DSM 13995 / JCM 10881 / RKU-1)).